We begin with the raw amino-acid sequence, 601 residues long: Somatic embryogenesis receptor kinase 5 (601 aa).

The first 24 residues, 1–24 (MEHGSSRGFIWLILFLDFVSRVTG), serve as a signal peptide directing secretion. The Extracellular portion of the chain corresponds to 25–215 (KTQVDALIAL…SPSPSPSGTS (191 aa)). N-linked (GlcNAc...) asparagine glycans are attached at residues asparagine 52, asparagine 81, asparagine 105, asparagine 129, asparagine 151, and asparagine 184. LRR repeat units lie at residues 71–94 (SVTR…AQLP), 95–118 (NLQY…GDLM), 119–141 (ELVS…LGKL), 143–165 (KLRF…LTAL), and 166–188 (PLDV…GSFS). Residues 216–236 (AAIVVGVAAGAALLFALAWWL) traverse the membrane as a helical segment. Over 237–601 (RRKLQGHFLD…IENDYPSGPR (365 aa)) the chain is Cytoplasmic. Residue threonine 272 is modified to Phosphothreonine. Residues 275–572 (FSKRNVLGKG…KEEMPIHDFN (298 aa)) form the Protein kinase domain. Residue 281–289 (LGKGRFGIL) participates in ATP binding. Threonine 298 carries the post-translational modification Phosphothreonine. An ATP-binding site is contributed by lysine 303. A phosphoserine mark is found at serine 356 and serine 359. Aspartate 402 acts as the Proton acceptor in catalysis. Phosphothreonine is present on residues threonine 435, threonine 436, and threonine 441. A Phosphotyrosine modification is found at tyrosine 449. Position 451 is a phosphoserine (serine 451). Residue threonine 452 is modified to Phosphothreonine. Serine 456 and serine 506 each carry phosphoserine. Threonine 532 carries the post-translational modification Phosphothreonine.

The protein belongs to the protein kinase superfamily. Ser/Thr protein kinase family. As to quaternary structure, interacts with TMK4/BARK1. In terms of processing, autophosphorylated.

It is found in the cell membrane. It catalyses the reaction L-seryl-[protein] + ATP = O-phospho-L-seryl-[protein] + ADP + H(+). The enzyme catalyses L-threonyl-[protein] + ATP = O-phospho-L-threonyl-[protein] + ADP + H(+). Serine/threonine-kinase of unknown function. This Arabidopsis thaliana (Mouse-ear cress) protein is Somatic embryogenesis receptor kinase 5 (SERK5).